A 414-amino-acid polypeptide reads, in one-letter code: MSKGLVVLAYSGGLDTSCILVWLKEQGYDVIAYLANIGQDEDFDVARKKAEKLGAKKVFIEDLRSEFVQEFIWPALQANALYEDRYLLGTSIARPCIARRQVQIAQREGAQYVSHGATGKGNDQVRFELTCYALYPQVQVIAPWRIPEFYNRFRGRKDLMEYAEKHNIPVPVTPKAPWSMDANLMHISYESGILENPKNHAPSDLYQMTKNPEHSPDQADMLEIEFKKGVPVRVSHLKDGISKETPLEIFCYLNEIGGKHGVGRIDIVENRFIGMKSRGIYETPGGTVLLQAHLDIETFTMDREVRKIKQSLGIKFSELIYNGFWFSPECEFVRECVERSQKHVEGRVQLSVYKGQVYILGRESPKSLYNEELVSMDVQGDYDPCDASGFIKINAVRLREHNRLQGAALSKHNV.

Residues 9-17 (AYSGGLDTS) and Ala35 contribute to the ATP site. L-citrulline is bound by residues Tyr86 and Ser91. ATP is bound at residue 114 to 122 (SHGATGKGN). L-aspartate-binding residues include Thr118, Asn122, and Asp123. Residue Asn122 participates in L-citrulline binding. L-citrulline is bound by residues Arg126, Ser179, Ser188, Glu269, and Tyr281.

The protein belongs to the argininosuccinate synthase family. In terms of assembly, homotetramer.

Its subcellular location is the cytoplasm. The protein localises to the cytosol. It catalyses the reaction L-citrulline + L-aspartate + ATP = 2-(N(omega)-L-arginino)succinate + AMP + diphosphate + H(+). It functions in the pathway amino-acid biosynthesis; L-arginine biosynthesis; L-arginine from L-ornithine and carbamoyl phosphate: step 2/3. The protein operates within nitrogen metabolism; urea cycle; (N(omega)-L-arginino)succinate from L-aspartate and L-citrulline: step 1/1. One of the enzymes of the urea cycle, the metabolic pathway transforming neurotoxic amonia produced by protein catabolism into inocuous urea in the liver of ureotelic animals. Catalyzes the formation of arginosuccinate from aspartate, citrulline and ATP and together with ASL it is responsible for the biosynthesis of arginine in most body tissues. The protein is Argininosuccinate synthase of Danio rerio (Zebrafish).